The primary structure comprises 281 residues: Lectin alpha chain (281 aa).

N-linked (GlcNAc...) asparagine glycans are attached at residues asparagine 35, asparagine 82, and asparagine 140.

It belongs to the leguminous lectin family. As to quaternary structure, tetramer of 2 alpha and 2 beta chains. In terms of processing, glycosylated. Post-translationally, the beta chain is produced by partial proteolytic processing of the alpha chain.

Its function is as follows. D-galactose-binding lectin. The sequence is that of Lectin alpha chain from Lablab purpureus (Hyacinth bean).